The sequence spans 392 residues: Putative non-inhibitory serpin-10 (392 aa).

The tract at residues 333–357 (GTTAVEATYSCCSPTYSGPESPKPR) is RCL.

Belongs to the serpin family.

In Oryza sativa subsp. japonica (Rice), this protein is Putative non-inhibitory serpin-10.